The chain runs to 54 residues: Large ribosomal subunit protein bL32c (54 aa).

The span at 1 to 20 shows a compositional bias: basic residues; the sequence is MAVPKKRVSKSKRDMRKTTW. Residues 1-54 form a disordered region; the sequence is MAVPKKRVSKSKRDMRKTTWKNKASKEAKKALSLAKSVSTGKSKSKGFQIKSSN. Low complexity predominate over residues 31–42; sequence ALSLAKSVSTGK.

The protein belongs to the bacterial ribosomal protein bL32 family.

It is found in the plastid. The protein localises to the chloroplast. The protein is Large ribosomal subunit protein bL32c of Chlorokybus atmophyticus (Soil alga).